Reading from the N-terminus, the 517-residue chain is MASDGARKQFWKRSNSKLPGSIQHVYGAQHPPFDPLLHGTLLRSTAKMPTTPVKAKRVSTFQEFESNTSDAWDAGEDDDELLAMAAESLNSEVVMETANRVLRNHSQRQGRPTLQEGPGLQQKPRPEAEPPSPPSGDLRLVKSVSESHTSCPAESASDAAPLQRSQSLPHSATVTLGGTSDPSTLSSSALSEREASRLDKFKQLLAGPNTDLEELRRLSWSGIPKPVRPMTWKLLSGYLPANVDRRPATLQRKQKEYFAFIEHYYDSRNDEVHQDTYRQIHIDIPRMSPEALILQPKVTEIFERILFIWAIRHPASGYVQGINDLVTPFFVVFICEYIEAEEVDTVDVSGVPAEVLCNIEADTYWCMSKLLDGIQDNYTFAQPGIQMKVKMLEELVSRIDEQVHRHLDQHEVRYLQFAFRWMNNLLMREVPLRCTIRLWDTYQSEPDGFSHFHLYVCAAFLVRWRKEILEEKDFQELLLFLQNLPTAHWDDEDISLLLAEAYRLKFAFADAPNHYKK.

A2 is modified (N-acetylalanine). Residues 103–191 (RNHSQRQGRP…PSTLSSSALS (89 aa)) are disordered. Residues S132, S145, and S167 each carry the phosphoserine modification. A compositionally biased stretch (polar residues) spans 163–174 (QRSQSLPHSATV). A compositionally biased stretch (low complexity) spans 176 to 190 (LGGTSDPSTLSSSAL). The region spanning 222–446 (GIPKPVRPMT…RLWDTYQSEP (225 aa)) is the Rab-GAP TBC domain.

In terms of assembly, homodimer. Interacts with ACBD3 and ARFGEF1. Interacts with YWHAB, YWHAE, YWHAG, YWHAH, YWHAQ and YWHAZ.

In terms of biological role, may act as a GTPase-activating protein for Rab family protein(s). In Homo sapiens (Human), this protein is TBC1 domain family member 22A (TBC1D22A).